The primary structure comprises 391 residues: Ferrochelatase (391 aa).

Residues histidine 196 and glutamate 281 each coordinate Fe cation.

It belongs to the ferrochelatase family.

Its subcellular location is the cytoplasm. It catalyses the reaction heme b + 2 H(+) = protoporphyrin IX + Fe(2+). Its pathway is porphyrin-containing compound metabolism; protoheme biosynthesis; protoheme from protoporphyrin-IX: step 1/1. In terms of biological role, catalyzes the ferrous insertion into protoporphyrin IX. In Prochlorococcus marinus (strain AS9601), this protein is Ferrochelatase.